We begin with the raw amino-acid sequence, 164 residues long: Putative anionic 4-hydroxy-benzoate permease (164 aa).

Residues 1 to 30 are disordered; that stretch reads CGRRRGSLAWPDASSPSANPRPGAGAAESS. The next 3 membrane-spanning stretches (helical) occupy residues 62 to 82, 97 to 117, and 126 to 146; these read LWVACFGFGTGACIILALMFM, GMAQCVGYLLAAFGPPLVGGL, and PALTVCLVLSLTMAAAGMLAG.

It belongs to the major facilitator superfamily. Cyanate porter (TC 2.A.1.17) family.

The protein localises to the cell membrane. May be involved in uptake of anionic 4-hydroxy-benzoate. This Thauera aromatica protein is Putative anionic 4-hydroxy-benzoate permease.